The chain runs to 320 residues: MSKSESPKEPEQLRKLFIGGLSFETTDESLRSHFEQWGTLTDCVVMRDPNTKRSRGFGFVTYATVEEVDAAMNARPHKVDGRVVEPKRAVSREDSQRPGAHLTVKKIFVGGIKEDTEEHHLRDYFEQYGKIEVIEIMTDRGSGKKRGFAFVTFDDHDSVDKIVIQKYHTVNGHNCEVRKALSKQEMASASSSQRGRSGSGNFGGGRGGGFGGNDNFGRGGNFSGRGGFGGSRGGGGYGGSGDGYNGFGNDGSNFGGGGSYNDFGNYNNQSSNFGPMKGGNFGGRSSGPYGGGGQYFAKPRNQGGYGGSSSSSSYGSGRRF.

The residue at position 1 (Met-1) is an N-acetylmethionine. At Ser-2 the chain carries N-acetylserine; in Heterogeneous nuclear ribonucleoprotein A1, N-terminally processed. The residue at position 2 (Ser-2) is a Phosphoserine. An N6-acetyllysine; alternate modification is found at Lys-3. A Glycyl lysine isopeptide (Lys-Gly) (interchain with G-Cter in SUMO2); alternate cross-link involves residue Lys-3. A phosphoserine mark is found at Ser-4 and Ser-6. The interval 4–94 (SESPKEPEQL…EPKRAVSRED (91 aa)) is globular A domain. Lys-8 participates in a covalent cross-link: Glycyl lysine isopeptide (Lys-Gly) (interchain with G-Cter in SUMO2). 2 consecutive RRM domains span residues 14 to 97 (RKLF…DSQR) and 105 to 184 (KKIF…LSKQ). Ser-22 bears the Phosphoserine mark. Residue Lys-78 forms a Glycyl lysine isopeptide (Lys-Gly) (interchain with G-Cter in SUMO2) linkage. The interval 95–185 (SQRPGAHLTV…EVRKALSKQE (91 aa)) is globular B domain. Residue Lys-113 forms a Glycyl lysine isopeptide (Lys-Gly) (interchain with G-Cter in SUMO) linkage. Residues Lys-179 and Lys-183 each participate in a glycyl lysine isopeptide (Lys-Gly) (interchain with G-Cter in SUMO2) cross-link. Residues 182 to 216 (SKQEMASASSSQRGRSGSGNFGGGRGGGFGGNDNF) are disordered. Ser-192 carries the post-translational modification Phosphoserine; by MKNK2. Arg-194 carries the asymmetric dimethylarginine; alternate modification. The residue at position 194 (Arg-194) is a Dimethylated arginine; alternate. Arg-194 bears the Omega-N-methylarginine; alternate mark. Residues 197 to 216 (SGSGNFGGGRGGGFGGNDNF) show a composition bias toward gly residues. Phosphoserine is present on Ser-199. An asymmetric dimethylarginine; alternate mark is found at Arg-206, Arg-218, Arg-225, and Arg-232. At Arg-206 the chain carries Dimethylated arginine; alternate. Omega-N-methylarginine; alternate occurs at positions 206, 218, 225, and 232. Residues 218-240 (RGGNFSGRGGFGGSRGGGGYGGS) form an RNA-binding RGG-box region. Arg-225 carries the dimethylated arginine; alternate modification. The interval 268–305 (NQSSNFGPMKGGNFGGRSSGPYGGGGQYFAKPRNQGGY) is nuclear targeting sequence. The tract at residues 274 to 320 (GPMKGGNFGGRSSGPYGGGGQYFAKPRNQGGYGGSSSSSSYGSGRRF) is disordered. Residues 276 to 294 (MKGGNFGGRSSGPYGGGGQ) are compositionally biased toward gly residues. At Arg-284 the chain carries Omega-N-methylarginine. Phosphoserine is present on Ser-285. Lys-298 is modified (N6-acetyllysine; alternate). Lys-298 is covalently cross-linked (Glycyl lysine isopeptide (Lys-Gly) (interchain with G-Cter in SUMO2); alternate). Position 300 is an omega-N-methylarginine (Arg-300). Residues 308–320 (SSSSSSYGSGRRF) show a composition bias toward low complexity. Position 309 is a phosphoserine (Ser-309). A phosphoserine; by MKNK2 mark is found at Ser-310, Ser-311, and Ser-312. Phosphoserine is present on residues Ser-313 and Ser-316. Arg-318 is modified (omega-N-methylarginine).

As to quaternary structure, identified in the spliceosome C complex. Identified in a IGF2BP1-dependent mRNP granule complex containing untranslated mRNAs. Interacts with SEPT6. Interacts with C9orf72. Interacts with KHDRBS1. Interacts with UBQLN2. Interacts with PPIA/CYPA. Sumoylated.

The protein localises to the nucleus. It localises to the cytoplasm. Its function is as follows. Involved in the packaging of pre-mRNA into hnRNP particles, transport of poly(A) mRNA from the nucleus to the cytoplasm and modulation of splice site selection. Plays a role in the splicing of pyruvate kinase PKM by binding repressively to sequences flanking PKM exon 9, inhibiting exon 9 inclusion and resulting in exon 10 inclusion and production of the PKM M2 isoform. Binds to the IRES and thereby inhibits the translation of the apoptosis protease activating factor APAF1. May bind to specific miRNA hairpins. The sequence is that of Heterogeneous nuclear ribonucleoprotein A1 (Hnrnpa1) from Mus musculus (Mouse).